Here is a 226-residue protein sequence, read N- to C-terminus: ATP-dependent dethiobiotin synthetase BioD (226 aa).

12–17 serves as a coordination point for ATP; it reads GVGKTV. Thr16 provides a ligand contact to Mg(2+). Lys37 is a catalytic residue. Substrate is bound at residue Thr41. ATP-binding positions include Asp49, 108 to 111, and 197 to 199; these read EGAG and PAG. Mg(2+)-binding residues include Asp49 and Glu108.

Belongs to the dethiobiotin synthetase family. In terms of assembly, homodimer. The cofactor is Mg(2+).

The protein resides in the cytoplasm. The enzyme catalyses (7R,8S)-7,8-diammoniononanoate + CO2 + ATP = (4R,5S)-dethiobiotin + ADP + phosphate + 3 H(+). The protein operates within cofactor biosynthesis; biotin biosynthesis; biotin from 7,8-diaminononanoate: step 1/2. Functionally, catalyzes a mechanistically unusual reaction, the ATP-dependent insertion of CO2 between the N7 and N8 nitrogen atoms of 7,8-diaminopelargonic acid (DAPA, also called 7,8-diammoniononanoate) to form a ureido ring. The chain is ATP-dependent dethiobiotin synthetase BioD from Mycobacterium avium (strain 104).